We begin with the raw amino-acid sequence, 43 residues long: MARWCPPANRSASAAATCSSVVANTACMRWCKKRSQCPARRTP.

The chain is Phi-Lf prophage-derived putative minor coat protein (gVII-1) from Xanthomonas campestris pv. campestris (strain ATCC 33913 / DSM 3586 / NCPPB 528 / LMG 568 / P 25).